The following is a 115-amino-acid chain: Beta-2-microglobulin (115 aa).

Residues M1–A18 form the signal peptide. The Ig-like C1-type domain maps to P23–G114.

It belongs to the beta-2-microglobulin family. Heterodimer of an alpha chain and a beta chain. Beta-2-microglobulin is the beta-chain of major histocompatibility complex class I molecules.

The protein resides in the secreted. Component of the class I major histocompatibility complex (MHC). Involved in the presentation of peptide antigens to the immune system. The sequence is that of Beta-2-microglobulin (b2m) from Paralichthys olivaceus (Bastard halibut).